A 670-amino-acid polypeptide reads, in one-letter code: DNA ligase (670 aa).

NAD(+) is bound by residues 32–36, 81–82, and Glu-111; these read DAEYD and SL. Catalysis depends on Lys-113, which acts as the N6-AMP-lysine intermediate. Arg-134, Glu-171, Lys-290, and Lys-314 together coordinate NAD(+). Residues Cys-408, Cys-411, Cys-426, and Cys-432 each contribute to the Zn(2+) site. Positions 591-670 constitute a BRCT domain; that stretch reads EEALSLKGQT…DGLLAVLAGE (80 aa).

This sequence belongs to the NAD-dependent DNA ligase family. LigA subfamily. Mg(2+) serves as cofactor. Mn(2+) is required as a cofactor.

It catalyses the reaction NAD(+) + (deoxyribonucleotide)n-3'-hydroxyl + 5'-phospho-(deoxyribonucleotide)m = (deoxyribonucleotide)n+m + AMP + beta-nicotinamide D-nucleotide.. In terms of biological role, DNA ligase that catalyzes the formation of phosphodiester linkages between 5'-phosphoryl and 3'-hydroxyl groups in double-stranded DNA using NAD as a coenzyme and as the energy source for the reaction. It is essential for DNA replication and repair of damaged DNA. This chain is DNA ligase, found in Shewanella sediminis (strain HAW-EB3).